Reading from the N-terminus, the 325-residue chain is Large ribosomal subunit protein uL1m (325 aa).

The N-terminal 50 residues, 1–50 (MAAAVRCMGRALIHHQRHSLSKMVYQTSLCSCSVNIRVPNRHFAAATKSA), are a transit peptide targeting the mitochondrion.

This sequence belongs to the universal ribosomal protein uL1 family. In terms of assembly, component of the mitochondrial large ribosomal subunit (mt-LSU). Mature mammalian 55S mitochondrial ribosomes consist of a small (28S) and a large (39S) subunit. The 28S small subunit contains a 12S ribosomal RNA (12S mt-rRNA) and 30 different proteins. The 39S large subunit contains a 16S rRNA (16S mt-rRNA), a copy of mitochondrial valine transfer RNA (mt-tRNA(Val)), which plays an integral structural role, and 52 different proteins.

It is found in the mitochondrion. The protein is Large ribosomal subunit protein uL1m (MRPL1) of Homo sapiens (Human).